A 338-amino-acid polypeptide reads, in one-letter code: Probable 1-aminocyclopropane-1-carboxylate deaminase (338 aa).

At Lys-51 the chain carries N6-(pyridoxal phosphate)lysine. Ser-78 acts as the Nucleophile in catalysis.

It belongs to the ACC deaminase/D-cysteine desulfhydrase family. Pyridoxal 5'-phosphate is required as a cofactor.

It carries out the reaction 1-aminocyclopropane-1-carboxylate + H2O = 2-oxobutanoate + NH4(+). Functionally, catalyzes a cyclopropane ring-opening reaction, the irreversible conversion of 1-aminocyclopropane-1-carboxylate (ACC) to ammonia and alpha-ketobutyrate. This Schizosaccharomyces pombe (strain 972 / ATCC 24843) (Fission yeast) protein is Probable 1-aminocyclopropane-1-carboxylate deaminase.